The sequence spans 492 residues: PHO85 cyclin-8 (492 aa).

Disordered regions lie at residues 1-32 (MAND…DNDS), 143-163 (SGSG…GTGR), and 223-252 (KVNS…ENES). Positions 8–20 (NKSLINDALTRSM) are enriched in polar residues. Positions 23-32 (FYDDDDDNDS) are enriched in acidic residues. Phosphoserine is present on Ser-32.

The protein belongs to the cyclin family. PHO80 subfamily. As to quaternary structure, forms a cyclin-CDK complex with PHO85.

It localises to the cytoplasm. The protein localises to the nucleus. Functionally, cyclin partner of the cyclin-dependent kinase (CDK) PHO85. Together with cyclin PCL10, negatively controls glycogen accumulation under favorable growth conditions. Involved in phosphorylation and negative regulation of glycogen synthase GSY2. Also has minor GLC8 kinase activity. The chain is PHO85 cyclin-8 (PCL8) from Saccharomyces cerevisiae (strain ATCC 204508 / S288c) (Baker's yeast).